Reading from the N-terminus, the 327-residue chain is DNA-directed RNA polymerase subunit alpha (327 aa).

The tract at residues 1-233 is alpha N-terminal domain (alpha-NTD); it reads MVREKVKVST…NLFIPFLHVE (233 aa). The alpha C-terminal domain (alpha-CTD) stretch occupies residues 267–327; the sequence is LAFQYIFIDQ…KKILDILEKK (61 aa).

The protein belongs to the RNA polymerase alpha chain family. In terms of assembly, in plastids the minimal PEP RNA polymerase catalytic core is composed of four subunits: alpha, beta, beta', and beta''. When a (nuclear-encoded) sigma factor is associated with the core the holoenzyme is formed, which can initiate transcription.

The protein localises to the plastid. The protein resides in the chloroplast. It carries out the reaction RNA(n) + a ribonucleoside 5'-triphosphate = RNA(n+1) + diphosphate. Its function is as follows. DNA-dependent RNA polymerase catalyzes the transcription of DNA into RNA using the four ribonucleoside triphosphates as substrates. This is DNA-directed RNA polymerase subunit alpha from Crucihimalaya wallichii (Rock-cress).